Here is a 567-residue protein sequence, read N- to C-terminus: Thiol:disulfide interchange protein DsbD (567 aa).

The N-terminal stretch at 1–19 is a signal peptide; that stretch reads MAQRIFTLILLLCSTSAFA. 2 disulfides stabilise this stretch: cysteine 122/cysteine 128 and cysteine 185/cysteine 307. 7 consecutive transmembrane segments (helical) span residues 170–192, 212–234, 246–268, 297–319, 326–348, 358–380, and 387–409; these read ALWA…MYPL, LAFI…VAAA, YVLI…LFTL, GAIA…LLYI, WLGG…LVTV, GPWM…VFLL, and AWGL…ITSL. Residues 435 to 567 enclose the Thioredoxin domain; the sequence is QDWAFGSPSA…FSAHLHDRQP (133 aa). A disulfide bridge connects residues cysteine 482 and cysteine 485.

It belongs to the thioredoxin family. DsbD subfamily.

It is found in the cell inner membrane. It catalyses the reaction [protein]-dithiol + NAD(+) = [protein]-disulfide + NADH + H(+). The enzyme catalyses [protein]-dithiol + NADP(+) = [protein]-disulfide + NADPH + H(+). In terms of biological role, required to facilitate the formation of correct disulfide bonds in some periplasmic proteins and for the assembly of the periplasmic c-type cytochromes. Acts by transferring electrons from cytoplasmic thioredoxin to the periplasm. This transfer involves a cascade of disulfide bond formation and reduction steps. This Salmonella typhi protein is Thiol:disulfide interchange protein DsbD.